The chain runs to 465 residues: Cysteine--tRNA ligase (465 aa).

Cys27 is a binding site for Zn(2+). The short motif at 29–39 (PTVYDDAHLGH) is the 'HIGH' region element. The Zn(2+) site is built by Cys207, His237, and Glu241. Positions 269–273 (KMSKS) match the 'KMSKS' region motif. ATP is bound at residue Lys272.

It belongs to the class-I aminoacyl-tRNA synthetase family. As to quaternary structure, monomer. It depends on Zn(2+) as a cofactor.

The protein localises to the cytoplasm. The enzyme catalyses tRNA(Cys) + L-cysteine + ATP = L-cysteinyl-tRNA(Cys) + AMP + diphosphate. This Helicobacter pylori (strain HPAG1) protein is Cysteine--tRNA ligase.